Consider the following 419-residue polypeptide: L-rhamnose isomerase (419 aa).

Positions 262, 294, and 296 each coordinate Mn(2+).

This sequence belongs to the rhamnose isomerase family. Homotetramer. Mn(2+) is required as a cofactor.

It is found in the cytoplasm. The catalysed reaction is L-rhamnopyranose = L-rhamnulose. Its pathway is carbohydrate degradation; L-rhamnose degradation; glycerone phosphate from L-rhamnose: step 1/3. In terms of biological role, catalyzes the interconversion of L-rhamnose and L-rhamnulose. This chain is L-rhamnose isomerase, found in Shigella flexneri.